The chain runs to 180 residues: Large ribosomal subunit protein uL16 (180 aa).

It belongs to the universal ribosomal protein uL16 family.

The polypeptide is Large ribosomal subunit protein uL16 (Pyrobaculum aerophilum (strain ATCC 51768 / DSM 7523 / JCM 9630 / CIP 104966 / NBRC 100827 / IM2)).